The primary structure comprises 145 residues: NADH-ubiquinone oxidoreductase subunit 8 (145 aa).

4Fe-4S ferredoxin-type domains follow at residues 43–73 (LRFYWCGLERCIACRLCDLICPSLALDVRVG) and 83–112 (DWFTLSYRRCIYCGFCMHVCPTDAITHSLF). C53, C56, C59, C63, C92, C95, C98, and C102 together coordinate [4Fe-4S] cluster.

It belongs to the complex I 23 kDa subunit family. The cofactor is [4Fe-4S] cluster.

It is found in the mitochondrion. It catalyses the reaction a ubiquinone + NADH + 5 H(+)(in) = a ubiquinol + NAD(+) + 4 H(+)(out). Its function is as follows. Core subunit of the mitochondrial membrane respiratory chain NADH dehydrogenase (Complex I) that is believed to belong to the minimal assembly required for catalysis. Complex I functions in the transfer of electrons from NADH to the respiratory chain. The immediate electron acceptor for the enzyme is believed to be ubiquinone. May donate electrons to ubiquinone. The chain is NADH-ubiquinone oxidoreductase subunit 8 (M-ISP1) from Trypanosoma brucei brucei.